A 142-amino-acid polypeptide reads, in one-letter code: ATP synthase epsilon chain (142 aa).

It belongs to the ATPase epsilon chain family. As to quaternary structure, F-type ATPases have 2 components, CF(1) - the catalytic core - and CF(0) - the membrane proton channel. CF(1) has five subunits: alpha(3), beta(3), gamma(1), delta(1), epsilon(1). CF(0) has three main subunits: a, b and c.

Its subcellular location is the cell inner membrane. Functionally, produces ATP from ADP in the presence of a proton gradient across the membrane. This Maridesulfovibrio salexigens (strain ATCC 14822 / DSM 2638 / NCIMB 8403 / VKM B-1763) (Desulfovibrio salexigens) protein is ATP synthase epsilon chain.